Consider the following 68-residue polypeptide: DNA-directed RNA polymerase subunit Rpo10 (68 aa).

Zn(2+) contacts are provided by C7, C10, C44, and C45.

This sequence belongs to the archaeal Rpo10/eukaryotic RPB10 RNA polymerase subunit family. Part of the RNA polymerase complex. Zn(2+) serves as cofactor.

It is found in the cytoplasm. It carries out the reaction RNA(n) + a ribonucleoside 5'-triphosphate = RNA(n+1) + diphosphate. Its function is as follows. DNA-dependent RNA polymerase (RNAP) catalyzes the transcription of DNA into RNA using the four ribonucleoside triphosphates as substrates. The protein is DNA-directed RNA polymerase subunit Rpo10 of Methanococcus maripaludis (strain C7 / ATCC BAA-1331).